The sequence spans 231 residues: MSEFLNENPDILEENQLPTRKEDSTKDLLLGGFSNEATLERRSLLLKIDHSLKSQVLQDIEVLDKLLSIRIPPELTSDEDSLPAESEDESVAGGGKEEEEPDLIDAQEIYDLIAHISDPEHPLSLGQLSVVNLEDIDVHDSGNQNEMAEVVIKITPTITHCSLATLIGLGIRVRLERSLPPRFRITILLKKGTHDSENQVNKQLNDKERVAAACENEQLLGVVSKMLVTCK.

2 disordered regions span residues 1–26 (MSEFLNENPDILEENQLPTRKEDSTK) and 75–100 (LTSDEDSLPAESEDESVAGGGKEEEE). The residue at position 2 (serine 2) is an N-acetylserine. Over residues 76 to 90 (TSDEDSLPAESEDES) the composition is skewed to acidic residues.

It belongs to the MIP18 family.

Functionally, may play a role in chromosome segregation through establishment of sister chromatid cohesion. The chain is MIP18 family protein YHR122W from Saccharomyces cerevisiae (strain ATCC 204508 / S288c) (Baker's yeast).